The following is a 1350-amino-acid chain: Tectonin beta-propeller repeat-containing protein (1350 aa).

TECPR repeat units follow at residues 23-59 (GAWR…VHVH), 233-271 (LRWT…VRTG), 280-320 (DSWL…FRRG), and 336-371 (KGWV…HRSG). A compositionally biased stretch (low complexity) spans 396–415 (SSLSIVSRKSGGSSSTPGSK). Disordered stretches follow at residues 396 to 420 (SSLS…QSFS) and 671 to 691 (SGSG…SGTF). The Galectin domain occupies 816-955 (YYNTLYNGMP…RIKLFNVLYR (140 aa)). 4 TECPR repeats span residues 966–1000 (MHWR…VYNG), 1187–1223 (DAWE…FRYG), 1232–1269 (DAWQ…VRKE), and 1278–1322 (SHWQ…RRCG).

The protein belongs to the TECPR1 family.

Functionally, involved in peroxisome biogenesis. This is Tectonin beta-propeller repeat-containing protein (Pex23) from Drosophila melanogaster (Fruit fly).